The following is a 526-amino-acid chain: Plant intracellular Ras-group-related LRR protein 5 (526 aa).

LRR repeat units lie at residues 229–252 (LSSL…IGGL), 253–275 (ISLT…IGDL), 276–297 (LNLV…SFNR), 298–321 (LIHL…IGSL), 323–344 (SLKK…ISGC), 346–367 (SMEE…VGKL), 368–390 (STLE…MSSM), 391–414 (ANLK…CYAK), 416–437 (LVKL…LIGN), 438–463 (LEKL…TLSN), and 465–484 (RVLQ…ITEK). The GVYW; degenerate motif lies at 485–492 (GAQAVVQY).

The protein belongs to the SHOC2 family. In terms of tissue distribution, widely expressed but preferentially in roots.

In terms of biological role, leucine-rich repeat protein that likely mediates protein interactions, possibly in the context of signal transduction. This is Plant intracellular Ras-group-related LRR protein 5 (PIRL5) from Arabidopsis thaliana (Mouse-ear cress).